Consider the following 477-residue polypeptide: Ribulose bisphosphate carboxylase large chain (477 aa).

Positions 1-2 (MS) are excised as a propeptide. The residue at position 3 (proline 3) is an N-acetylproline. Lysine 14 is modified (N6,N6,N6-trimethyllysine). Residues asparagine 123 and threonine 173 each coordinate substrate. Residue lysine 175 is the Proton acceptor of the active site. Lysine 177 is a substrate binding site. Residues lysine 201, aspartate 203, and glutamate 204 each coordinate Mg(2+). Lysine 201 is modified (N6-carboxylysine). The Proton acceptor role is filled by histidine 294. The substrate site is built by arginine 295, histidine 327, and serine 379.

This sequence belongs to the RuBisCO large chain family. Type I subfamily. In terms of assembly, heterohexadecamer of 8 large chains and 8 small chains; disulfide-linked. The disulfide link is formed within the large subunit homodimers. It depends on Mg(2+) as a cofactor. Post-translationally, the disulfide bond which can form in the large chain dimeric partners within the hexadecamer appears to be associated with oxidative stress and protein turnover.

Its subcellular location is the plastid. It is found in the chloroplast. It carries out the reaction 2 (2R)-3-phosphoglycerate + 2 H(+) = D-ribulose 1,5-bisphosphate + CO2 + H2O. It catalyses the reaction D-ribulose 1,5-bisphosphate + O2 = 2-phosphoglycolate + (2R)-3-phosphoglycerate + 2 H(+). Functionally, ruBisCO catalyzes two reactions: the carboxylation of D-ribulose 1,5-bisphosphate, the primary event in carbon dioxide fixation, as well as the oxidative fragmentation of the pentose substrate in the photorespiration process. Both reactions occur simultaneously and in competition at the same active site. This Solanum lycopersicum (Tomato) protein is Ribulose bisphosphate carboxylase large chain (rbcL).